A 364-amino-acid chain; its full sequence is Phosphoserine aminotransferase (364 aa).

Arg-46 serves as a coordination point for L-glutamate. Residues 80–81 (AR), Trp-106, Thr-157, Asp-176, and Gln-199 each bind pyridoxal 5'-phosphate. The residue at position 200 (Lys-200) is an N6-(pyridoxal phosphate)lysine. 241 to 242 (NT) serves as a coordination point for pyridoxal 5'-phosphate.

This sequence belongs to the class-V pyridoxal-phosphate-dependent aminotransferase family. SerC subfamily. As to quaternary structure, homodimer. Pyridoxal 5'-phosphate serves as cofactor.

It localises to the cytoplasm. It carries out the reaction O-phospho-L-serine + 2-oxoglutarate = 3-phosphooxypyruvate + L-glutamate. The catalysed reaction is 4-(phosphooxy)-L-threonine + 2-oxoglutarate = (R)-3-hydroxy-2-oxo-4-phosphooxybutanoate + L-glutamate. It participates in amino-acid biosynthesis; L-serine biosynthesis; L-serine from 3-phospho-D-glycerate: step 2/3. The protein operates within cofactor biosynthesis; pyridoxine 5'-phosphate biosynthesis; pyridoxine 5'-phosphate from D-erythrose 4-phosphate: step 3/5. Functionally, catalyzes the reversible conversion of 3-phosphohydroxypyruvate to phosphoserine and of 3-hydroxy-2-oxo-4-phosphonooxybutanoate to phosphohydroxythreonine. The polypeptide is Phosphoserine aminotransferase (Vibrio cholerae serotype O1 (strain ATCC 39315 / El Tor Inaba N16961)).